Consider the following 319-residue polypeptide: Homeobox protein Hox-B5a (319 aa).

Positions 114–224 are disordered; that stretch reads SLLSPGSGDT…NTVGSEGQPP (111 aa). Positions 128–155 are enriched in low complexity; it reads RSSSPRSEQSGSGNLSSTNLSSSTNISS. The short motif at 226–231 is the Antp-type hexapeptide element; that stretch reads IFPWMR. A DNA-binding region (homeobox) is located at residues 244-303; it reads GKRARTAYTRYQTLELEKEFHFNRYLTRRRRIEIAHALCLTERQIKIWFQNRRMKWKKDN.

Belongs to the Antp homeobox family.

It is found in the nucleus. In terms of biological role, sequence-specific transcription factor which is part of a developmental regulatory system that provides cells with specific positional identities on the anterior-posterior axis. This is Homeobox protein Hox-B5a (hoxb5a) from Takifugu rubripes (Japanese pufferfish).